Reading from the N-terminus, the 727-residue chain is Two-component response regulator-like APRR7 (727 aa).

The segment at 1–47 (MNANEEGEGSRYPITDRKTGETKFDRVESRTEKHSEEEKTNGITMDV) is disordered. Residues 14-40 (ITDRKTGETKFDRVESRTEKHSEEEKT) are compositionally biased toward basic and acidic residues. Positions 79 to 197 (RVLLVENDDC…ELKILWQHVW (119 aa)) constitute a Response regulatory domain. 6 disordered regions span residues 203 to 265 (SSGS…KKAV), 291 to 312 (NPEFPSNQLVAPPAEKETQEHD), 339 to 416 (KDEP…KTLD), 464 to 487 (SRYNPASNANKISGGNLGSTSLQD), 509 to 560 (ESLP…QPLP), and 606 to 670 (VNGS…SQRE). The segment covering 246–259 (ASDGSSDGSGAQSS) has biased composition (low complexity). Composition is skewed to polar residues over residues 344-353 (SKTTGIMRQD), 467-487 (NPASNANKISGGNLGSTSLQD), and 519-535 (VGSNNFDMSSTTENNAF). A compositionally biased stretch (low complexity) spans 538–555 (PGAPKVSSAGSSSVKHSS). Positions 641 to 657 (GKNGNGDGSGSGSGSGS) are enriched in gly residues. One can recognise a CCT domain in the interval 669–711 (REAALTKFRQKRKERCFRKKVRYQSRKKLAEQRPRVRGQFVRK).

Belongs to the ARR-like family. In terms of processing, phosphorylated. Phosphorylation varies throughout the diurnal cycle.

The protein localises to the nucleus. Its function is as follows. Transcriptional repressor of CCA1 and LHY, and positive regulator of LWD1 and LWD2 expression. Represses the expression of other clock proteins and master regulators of plant growth, development and response to abiotic stress. Involved in the positive and negative feedback loops of the circadian clock. Controls photoperiodic flowering response and temperature compensation. Expression of several members of the ARR-like family is controlled by circadian rhythm. APRR9, APRR7, and APRR5 coordinately act on the upstream region of the target genes to repress their expression from noon until midnight. The particular coordinated sequential expression of APRR9, APRR7, APRR5, APRR3 and APPR1 result to circadian waves that may be at the basis of the endogenous circadian clock. The chain is Two-component response regulator-like APRR7 (APRR7) from Arabidopsis thaliana (Mouse-ear cress).